We begin with the raw amino-acid sequence, 549 residues long: Glucose-6-phosphate isomerase (549 aa).

An N6-acetyllysine mark is found at lysine 80, lysine 228, and lysine 234. Glutamate 355 acts as the Proton donor in catalysis. Active-site residues include histidine 386 and lysine 514.

The protein belongs to the GPI family.

Its subcellular location is the cytoplasm. It catalyses the reaction alpha-D-glucose 6-phosphate = beta-D-fructose 6-phosphate. Its pathway is carbohydrate biosynthesis; gluconeogenesis. It participates in carbohydrate degradation; glycolysis; D-glyceraldehyde 3-phosphate and glycerone phosphate from D-glucose: step 2/4. In terms of biological role, catalyzes the reversible isomerization of glucose-6-phosphate to fructose-6-phosphate. The polypeptide is Glucose-6-phosphate isomerase (Shigella flexneri).